An 83-amino-acid polypeptide reads, in one-letter code: Protein WFDC9 (83 aa).

Positions 1 to 24 (MKPWIIVLTVSAHGILVFLHVLGS) are cleaved as a signal peptide.

It is found in the secreted. This chain is Protein WFDC9 (Wfdc9), found in Mus musculus (Mouse).